An 80-amino-acid chain; its full sequence is Cell division protein ZapB (80 aa).

The stretch at 3–80 forms a coiled coil; it reads FEVLEQLESK…ALLGKMDEVE (78 aa). A compositionally biased stretch (basic and acidic residues) spans 41–53; sequence ANELRSQREELEQ. The interval 41-60 is disordered; it reads ANELRSQREELEQKSQQAQQ.

Belongs to the ZapB family. As to quaternary structure, homodimer. The ends of the coiled-coil dimer bind to each other, forming polymers. Interacts with FtsZ.

Its subcellular location is the cytoplasm. In terms of biological role, non-essential, abundant cell division factor that is required for proper Z-ring formation. It is recruited early to the divisome by direct interaction with FtsZ, stimulating Z-ring assembly and thereby promoting cell division earlier in the cell cycle. Its recruitment to the Z-ring requires functional FtsA or ZipA. The sequence is that of Cell division protein ZapB from Vibrio campbellii (strain ATCC BAA-1116).